The sequence spans 215 residues: Cytochrome b6 (215 aa).

A helical transmembrane segment spans residues 32 to 52 (IFYCLGGITLTCFLVQVATGF). Cys35 is a binding site for heme c. Positions 86 and 100 each coordinate heme b. 3 helical membrane passes run 90 to 110 (ASMMVLMMILHVFRVYLTGGF), 116 to 136 (LTWVTGVVLGVLTATFGVTGY), and 186 to 206 (LHTFVLPLLTAVFMLMHFLMI). Positions 187 and 202 each coordinate heme b.

This sequence belongs to the cytochrome b family. PetB subfamily. The 4 large subunits of the cytochrome b6-f complex are cytochrome b6, subunit IV (17 kDa polypeptide, PetD), cytochrome f and the Rieske protein, while the 4 small subunits are PetG, PetL, PetM and PetN. The complex functions as a dimer. The cofactor is heme b. Requires heme c as cofactor.

It is found in the plastid. It localises to the chloroplast thylakoid membrane. In terms of biological role, component of the cytochrome b6-f complex, which mediates electron transfer between photosystem II (PSII) and photosystem I (PSI), cyclic electron flow around PSI, and state transitions. In Pisum sativum (Garden pea), this protein is Cytochrome b6.